We begin with the raw amino-acid sequence, 106 residues long: Evasin P1168 (106 aa).

The N-terminal stretch at 1–24 is a signal peptide; the sequence is MEVKISTFLQIAVLIVLGIHLIAA. Intrachain disulfides connect Cys-45–Cys-67, Cys-49–Cys-69, and Cys-60–Cys-80. N-linked (GlcNAc...) asparagine glycans are attached at residues Asn-48, Asn-54, and Asn-64.

The protein resides in the secreted. Functionally, salivary chemokine-binding protein which binds to host chemokines CXCL1, CXCL2 and CXCL8. This is Evasin P1168 from Ixodes ricinus (Common tick).